A 412-amino-acid polypeptide reads, in one-letter code: Proteasome-activating nucleotidase 2 (412 aa).

Positions 28–74 (LRQHFERMVDVNRELDQRLQNADDRHAELVDEVDQMKARNEALKTAS) form a coiled coil. ATP is bound by residues 196–201 (GTGKTM) and H335. Residues 409–412 (DYQY) are docks into pockets in the proteasome alpha-ring to cause gate opening.

Belongs to the AAA ATPase family. As to quaternary structure, homohexamer. The hexameric complex has a two-ring architecture resembling a top hat that caps the 20S proteasome core at one or both ends. Upon ATP-binding, the C-terminus of PAN interacts with the alpha-rings of the proteasome core by binding to the intersubunit pockets.

Its subcellular location is the cytoplasm. Its function is as follows. ATPase which is responsible for recognizing, binding, unfolding and translocation of substrate proteins into the archaeal 20S proteasome core particle. Is essential for opening the gate of the 20S proteasome via an interaction with its C-terminus, thereby allowing substrate entry and access to the site of proteolysis. Thus, the C-termini of the proteasomal ATPase function like a 'key in a lock' to induce gate opening and therefore regulate proteolysis. Unfolding activity requires energy from ATP hydrolysis, whereas ATP binding alone promotes ATPase-20S proteasome association which triggers gate opening, and supports translocation of unfolded substrates. The protein is Proteasome-activating nucleotidase 2 of Haloferax volcanii (strain ATCC 29605 / DSM 3757 / JCM 8879 / NBRC 14742 / NCIMB 2012 / VKM B-1768 / DS2) (Halobacterium volcanii).